An 81-amino-acid polypeptide reads, in one-letter code: MAVRIRLTRLGRKKMPFYRLVVADSEAKRDGKFLDIVGTYDPMQDPAVITINDEKLQDWVGRGALPTTTVKSLLKKAAANK.

Belongs to the bacterial ribosomal protein bS16 family.

The polypeptide is Small ribosomal subunit protein bS16 (Desulfotalea psychrophila (strain LSv54 / DSM 12343)).